The chain runs to 309 residues: Ribonuclease Z (309 aa).

The Zn(2+) site is built by H63, H65, D67, H68, H145, D216, and H274. D67 (proton acceptor) is an active-site residue.

Belongs to the RNase Z family. As to quaternary structure, homodimer. Zn(2+) serves as cofactor.

The enzyme catalyses Endonucleolytic cleavage of RNA, removing extra 3' nucleotides from tRNA precursor, generating 3' termini of tRNAs. A 3'-hydroxy group is left at the tRNA terminus and a 5'-phosphoryl group is left at the trailer molecule.. In terms of biological role, zinc phosphodiesterase, which displays some tRNA 3'-processing endonuclease activity. Probably involved in tRNA maturation, by removing a 3'-trailer from precursor tRNA. This chain is Ribonuclease Z, found in Streptococcus pneumoniae (strain 70585).